Reading from the N-terminus, the 300-residue chain is ATP synthase gamma chain (300 aa).

Belongs to the ATPase gamma chain family. F-type ATPases have 2 components, CF(1) - the catalytic core - and CF(0) - the membrane proton channel. CF(1) has five subunits: alpha(3), beta(3), gamma(1), delta(1), epsilon(1). CF(0) has three main subunits: a, b and c.

The protein localises to the cell membrane. Its function is as follows. Produces ATP from ADP in the presence of a proton gradient across the membrane. The gamma chain is believed to be important in regulating ATPase activity and the flow of protons through the CF(0) complex. The sequence is that of ATP synthase gamma chain from Acidothermus cellulolyticus (strain ATCC 43068 / DSM 8971 / 11B).